A 384-amino-acid chain; its full sequence is Alpha-2B adrenergic receptor (384 aa).

The helical transmembrane segment at 1–25 threads the bilayer; sequence AIAAVTTFLILFTVFGNALVILAVL. The Cytoplasmic segment spans residues 26-36; it reads TSRSLRAPQNL. The chain crosses the membrane as a helical span at residues 37–62; it reads FLVSLAAADILVATLIXPFSLANELL. The Extracellular portion of the chain corresponds to 63–72; it reads GYWYFWHTWC. Cys72 and Cys151 form a disulfide bridge. The chain crosses the membrane as a helical span at residues 73–95; the sequence is EVYLALXVLXCTSSIVHLCAISL. The Cytoplasmic portion of the chain corresponds to 96–117; that stretch reads DRYWAVSRALEYNSKRTPRRIX. A helical membrane pass occupies residues 118–140; that stretch reads GIILTVWLIAAAISLPPLIYKGD. Residues 141–156 are Extracellular-facing; sequence QGPQPHGRPQCRLNQE. A helical membrane pass occupies residues 157 to 180; sequence AWYILSSSIGSFFAPCLIMILVYL. Over 181–348 the chain is Cytoplasmic; it reads RIYLIAKRRN…LTREKRFTFV (168 aa). The segment at 193–306 is disordered; sequence GPRAQGASKG…SXGSPQLQQP (114 aa). The span at 288–306 shows a compositional bias: low complexity; that stretch reads PEALPASPASXGSPQLQQP. Residues 349-372 traverse the membrane as a helical segment; the sequence is LAVVIGVXVLCWFPFFXSYSLGAI. Residues 373-381 lie on the Extracellular side of the membrane; the sequence is CPQHCTVXH. A helical transmembrane segment spans residues 382 to 384; that stretch reads GLF.

It belongs to the G-protein coupled receptor 1 family. Adrenergic receptor subfamily. ADRA2B sub-subfamily. As to quaternary structure, interacts with RAB26. Interacts with PPP1R9B. Interacts with GGA1, GGA2 and GGA3.

The protein resides in the cell membrane. Alpha-2 adrenergic receptors mediate the catecholamine-induced inhibition of adenylate cyclase through the action of G proteins. The chain is Alpha-2B adrenergic receptor (ADRA2B) from Echinops telfairi (Lesser hedgehog tenrec).